The sequence spans 129 residues: Small ribosomal subunit protein uS12 (129 aa).

Disordered stretches follow at residues 1–25 and 110–129; these read MPTY…PALE and RKQG…VTKK. The segment covering 10–20 has biased composition (basic residues); the sequence is FGRKSKTRKTK.

It belongs to the universal ribosomal protein uS12 family. As to quaternary structure, part of the 30S ribosomal subunit. Contacts proteins S8 and S17. May interact with IF1 in the 30S initiation complex.

With S4 and S5 plays an important role in translational accuracy. Its function is as follows. Interacts with and stabilizes bases of the 16S rRNA that are involved in tRNA selection in the A site and with the mRNA backbone. Located at the interface of the 30S and 50S subunits, it traverses the body of the 30S subunit contacting proteins on the other side and probably holding the rRNA structure together. The combined cluster of proteins S8, S12 and S17 appears to hold together the shoulder and platform of the 30S subunit. This is Small ribosomal subunit protein uS12 from Rickettsia conorii (strain ATCC VR-613 / Malish 7).